Consider the following 249-residue polypeptide: MIDPIHQFNVEKIFTIGHIGNQEIAFTNSSAYMLLAVAIISLLMIGGSAGRQMVPGRLQSLAELSYEFVANTIRSTAGVEGLKFFPLVFSLFMFIMVSNMVGIIPYTFTIASHIIVTAALAFLVFFTVLIYGFKKNGLGFFKIFVPSGVPGFILPLVVFIEVFSFFLRPISHSVRLFANMLAGHIALKVFASFIPLLAGLGIAGYFGAVLPLGMVVALTALELLVAFLQAYVFAILTCIYLNDALHAGH.

6 helical membrane passes run 30–50 (SAYM…GSAG), 84–104 (FFPL…VGII), 113–133 (HIIV…IYGF), 143–163 (IFVP…IEVF), 196–216 (LLAG…GMVV), and 221–241 (LELL…CIYL).

This sequence belongs to the ATPase A chain family. F-type ATPases have 2 components, CF(1) - the catalytic core - and CF(0) - the membrane proton channel. CF(1) has five subunits: alpha(3), beta(3), gamma(1), delta(1), epsilon(1). CF(0) has four main subunits: a, b, b' and c.

The protein resides in the cell inner membrane. Functionally, key component of the proton channel; it plays a direct role in the translocation of protons across the membrane. The protein is ATP synthase subunit a of Rhodopseudomonas palustris (strain BisA53).